We begin with the raw amino-acid sequence, 54 residues long: Photosystem II reaction center protein K (54 aa).

A propeptide spanning residues 1-17 (MSFITLNNFFNTNTFFG) is cleaved from the precursor. A helical membrane pass occupies residues 29 to 49 (LIDVLPIIPVLFFLLAFVWQA).

The protein belongs to the PsbK family. PSII is composed of 1 copy each of membrane proteins PsbA, PsbB, PsbC, PsbD, PsbE, PsbF, PsbH, PsbI, PsbJ, PsbK, PsbL, PsbM, PsbT, PsbY, PsbZ, Psb30/Ycf12, at least 3 peripheral proteins of the oxygen-evolving complex and a large number of cofactors. It forms dimeric complexes.

The protein localises to the plastid. Its subcellular location is the chloroplast thylakoid membrane. One of the components of the core complex of photosystem II (PSII). PSII is a light-driven water:plastoquinone oxidoreductase that uses light energy to abstract electrons from H(2)O, generating O(2) and a proton gradient subsequently used for ATP formation. It consists of a core antenna complex that captures photons, and an electron transfer chain that converts photonic excitation into a charge separation. This chain is Photosystem II reaction center protein K, found in Euglena gracilis.